Consider the following 249-residue polypeptide: Probable endopeptidase YafL (249 aa).

A signal peptide spans 1–17; the sequence is MSLPSIPSFVLSGLLLI. Cys18 carries N-palmitoyl cysteine lipidation. Cys18 carries the S-diacylglycerol cysteine lipid modification. Positions 116 to 243 constitute a NlpC/P60 domain; that stretch reads HNITEVAIHR…DHFLGARRIL (128 aa). Residue Cys147 is the Nucleophile of the active site. The active-site Proton acceptor is the His202. Residue Glu214 is part of the active site.

It belongs to the peptidase C40 family.

The protein resides in the cell membrane. The sequence is that of Probable endopeptidase YafL (yafL) from Escherichia coli (strain K12).